The chain runs to 212 residues: Probable GTP-binding protein EngB (212 aa).

Positions 38–210 (SLPEIAFVGK…KASLAKCIKP (173 aa)) constitute an EngB-type G domain. Residues 46 to 53 (GKSNVGKS), 73 to 77 (GRTRQ), 91 to 94 (DLPG), 158 to 161 (TKSD), and 189 to 191 (VSN) each bind GTP. Mg(2+) is bound by residues Ser-53 and Thr-75.

The protein belongs to the TRAFAC class TrmE-Era-EngA-EngB-Septin-like GTPase superfamily. EngB GTPase family. Mg(2+) is required as a cofactor.

In terms of biological role, necessary for normal cell division and for the maintenance of normal septation. The sequence is that of Probable GTP-binding protein EngB from Rickettsia africae (strain ESF-5).